Consider the following 370-residue polypeptide: Aminomethyltransferase (370 aa).

This sequence belongs to the GcvT family. The glycine cleavage system is composed of four proteins: P, T, L and H.

The enzyme catalyses N(6)-[(R)-S(8)-aminomethyldihydrolipoyl]-L-lysyl-[protein] + (6S)-5,6,7,8-tetrahydrofolate = N(6)-[(R)-dihydrolipoyl]-L-lysyl-[protein] + (6R)-5,10-methylene-5,6,7,8-tetrahydrofolate + NH4(+). Its function is as follows. The glycine cleavage system catalyzes the degradation of glycine. In Clostridium botulinum (strain ATCC 19397 / Type A), this protein is Aminomethyltransferase.